Reading from the N-terminus, the 198-residue chain is GTP cyclohydrolase-2 (198 aa).

52–56 serves as a coordination point for GTP; it reads RMHSE. Positions 57, 68, and 70 each coordinate Zn(2+). Residues Gln73, 94 to 96, and Thr116 each bind GTP; that span reads EGR. Asp128 serves as the catalytic Proton acceptor. Arg130 functions as the Nucleophile in the catalytic mechanism. GTP is bound by residues Thr151 and Lys156.

Belongs to the GTP cyclohydrolase II family. It depends on Zn(2+) as a cofactor.

It catalyses the reaction GTP + 4 H2O = 2,5-diamino-6-hydroxy-4-(5-phosphoribosylamino)-pyrimidine + formate + 2 phosphate + 3 H(+). Its pathway is cofactor biosynthesis; riboflavin biosynthesis; 5-amino-6-(D-ribitylamino)uracil from GTP: step 1/4. Functionally, catalyzes the conversion of GTP to 2,5-diamino-6-ribosylamino-4(3H)-pyrimidinone 5'-phosphate (DARP), formate and pyrophosphate. The sequence is that of GTP cyclohydrolase-2 from Vibrio cholerae serotype O1 (strain ATCC 39315 / El Tor Inaba N16961).